The following is a 190-amino-acid chain: Large ribosomal subunit protein bL17 (190 aa).

Residues 135 to 165 are compositionally biased toward low complexity; the sequence is AKAAPAAEEAPAEEAPAAEEAATEEAPAAEE. Positions 135-190 are disordered; the sequence is AKAAPAAEEAPAEEAPAAEEAATEEAPAAEETATEEAAAEEAPAAEEAPAEEKDAK.

Belongs to the bacterial ribosomal protein bL17 family. Part of the 50S ribosomal subunit. Contacts protein L32.

This Pseudarthrobacter chlorophenolicus (strain ATCC 700700 / DSM 12829 / CIP 107037 / JCM 12360 / KCTC 9906 / NCIMB 13794 / A6) (Arthrobacter chlorophenolicus) protein is Large ribosomal subunit protein bL17.